Here is a 134-residue protein sequence, read N- to C-terminus: Profilin-3 (134 aa).

Cys13 and Cys118 form a disulfide bridge. The short motif at 84–100 (AVIRGKKGSGGITIKKT) is the Involved in PIP2 interaction element.

This sequence belongs to the profilin family. Occurs in many kinds of cells as a complex with monomeric actin in a 1:1 ratio. Post-translationally, phosphorylated by MAP kinases.

The protein resides in the cytoplasm. It is found in the cytoskeleton. Binds to actin and affects the structure of the cytoskeleton. At high concentrations, profilin prevents the polymerization of actin, whereas it enhances it at low concentrations. The chain is Profilin-3 from Olea europaea (Common olive).